Reading from the N-terminus, the 558-residue chain is Podocalyxin (558 aa).

The signal sequence occupies residues 1 to 22 (MRCALALSALLLLLSTPPLLPS). Positions 20-29 (LPSSPSPSPS) are enriched in pro residues. Disordered regions lie at residues 20–50 (LPSS…PTPA), 83–210 (LGVS…DHLM), and 270–338 (SVIS…VAHE). Over 23–461 (SPSPSPSPSQ…EEAEDRFSMP (439 aa)) the chain is Extracellular. 2 stretches are compositionally biased toward polar residues: residues 32–50 (QNAT…PTPA) and 83–107 (LGVS…NTTV). N-linked (GlcNAc...) asparagine glycans are attached at residues N33, N43, and N104. The span at 125 to 142 (STKSADTTTVATSTATAK) shows a compositional bias: low complexity. 3 stretches are compositionally biased toward polar residues: residues 143 to 173 (PNTT…LTST), 190 to 204 (RQPT…PTSS), and 270 to 302 (SVIS…TSPA). A glycan (N-linked (GlcNAc...) asparagine) is linked at N144. Over residues 313–324 (TMSSSPTAASTT) the composition is skewed to low complexity. N360 carries an N-linked (GlcNAc...) asparagine glycan. A helical transmembrane segment spans residues 462 to 482 (LIITIVCMASFLLLVAALYGC). Topologically, residues 483 to 558 (CHQRLSQRKD…DLDEEEDTHL (76 aa)) are cytoplasmic. T518 bears the Phosphothreonine mark. Residues S529 and S537 each carry the phosphoserine modification. The residue at position 556 (T556) is a Phosphothreonine.

The protein belongs to the podocalyxin family. In terms of assembly, monomer; when associated with the membrane raft. Oligomer; when integrated in the apical membrane. Interacts (via the C-terminal PDZ-binding motif DTHL) with NHERF1 (via the PDZ domains); the interaction is not detected in glomerular epithelium cells, take place early in the secretory pathway and is necessary for its apical membrane sorting. Found in a complex with EZR, PODXL and NHERF2. Associates with the actin cytoskeleton through complex formation with EZR and NHERF2. Interacts (via the C-terminal PDZ-binding motif DTHL) with NHERF2 (via the PDZ 1 domain); interaction is detected in glomerular epithelium cells. Interacts with EZR. In terms of processing, N- and O-linked glycosylated. Sialoglycoprotein. As to expression, glomerular epithelium cell (podocyte).

Its subcellular location is the apical cell membrane. The protein resides in the cell projection. It localises to the lamellipodium. The protein localises to the filopodium. It is found in the ruffle. Its subcellular location is the microvillus. The protein resides in the membrane raft. It localises to the membrane. Involved in the regulation of both adhesion and cell morphology and cancer progression. Functions as an anti-adhesive molecule that maintains an open filtration pathway between neighboring foot processes in the podocyte by charge repulsion. Acts as a pro-adhesive molecule, enhancing the adherence of cells to immobilized ligands, increasing the rate of migration and cell-cell contacts in an integrin-dependent manner. Induces the formation of apical actin-dependent microvilli. Involved in the formation of a preapical plasma membrane subdomain to set up initial epithelial polarization and the apical lumen formation during renal tubulogenesis. Plays a role in cancer development and aggressiveness by inducing cell migration and invasion through its interaction with the actin-binding protein EZR. Affects EZR-dependent signaling events, leading to increased activities of the MAPK and PI3K pathways in cancer cells. This chain is Podocalyxin (PODXL), found in Homo sapiens (Human).